Here is a 705-residue protein sequence, read N- to C-terminus: Ribosomal RNA large subunit methyltransferase K/L (705 aa).

Positions 43–154 (VVYRCCLWSR…GEKGILGFDL (112 aa)) constitute a THUMP domain.

Belongs to the methyltransferase superfamily. RlmKL family.

The protein localises to the cytoplasm. The catalysed reaction is guanosine(2445) in 23S rRNA + S-adenosyl-L-methionine = N(2)-methylguanosine(2445) in 23S rRNA + S-adenosyl-L-homocysteine + H(+). It catalyses the reaction guanosine(2069) in 23S rRNA + S-adenosyl-L-methionine = N(2)-methylguanosine(2069) in 23S rRNA + S-adenosyl-L-homocysteine + H(+). Functionally, specifically methylates the guanine in position 2445 (m2G2445) and the guanine in position 2069 (m7G2069) of 23S rRNA. In Aliivibrio salmonicida (strain LFI1238) (Vibrio salmonicida (strain LFI1238)), this protein is Ribosomal RNA large subunit methyltransferase K/L.